Consider the following 817-residue polypeptide: Ribonuclease R 1 (817 aa).

In terms of domain architecture, RNB spans 259–584; it reads RVDYRNEITF…DLLVHRLIRE (326 aa). In terms of domain architecture, S1 motif spans 637–717; the sequence is GEEYEGIIAS…MTGEIDFEYL (81 aa). The disordered stretch occupies residues 728-817; that stretch reads AKAKKKPDHK…DGRKKPHKRG (90 aa). A compositionally biased stretch (basic residues) spans 729-742; the sequence is KAKKKPDHKGRKKS. Basic and acidic residues-rich tracts occupy residues 767–777 and 795–810; these read RRADEKFEFDK and KFTDKKDNGKKFTDGR.

Belongs to the RNR ribonuclease family. RNase R subfamily.

The protein localises to the cytoplasm. It carries out the reaction Exonucleolytic cleavage in the 3'- to 5'-direction to yield nucleoside 5'-phosphates.. 3'-5' exoribonuclease that releases 5'-nucleoside monophosphates and is involved in maturation of structured RNAs. The chain is Ribonuclease R 1 (rnr1) from Lactococcus lactis subsp. lactis (strain IL1403) (Streptococcus lactis).